The following is a 220-amino-acid chain: Ribosomal RNA small subunit methyltransferase G (220 aa).

Residues G82, L87, 105–107 (DST), 133–134 (VE), and R147 contribute to the S-adenosyl-L-methionine site.

The protein belongs to the methyltransferase superfamily. RNA methyltransferase RsmG family.

Its subcellular location is the cytoplasm. In terms of biological role, specifically methylates the N7 position of a guanine in 16S rRNA. The polypeptide is Ribosomal RNA small subunit methyltransferase G (Chlorobium limicola (strain DSM 245 / NBRC 103803 / 6330)).